Here is a 159-residue protein sequence, read N- to C-terminus: MMTTHKQVNIYTDGSCLGNPGPGGYGIVMQYKQHSKEIADGFALTTNNRMELLAPIIALEALMEPCIVTLTSDSQYMRQGITQWIHGWKKKGWMTSNKQAVKNVDLWKRLDSVSQRHNIDWRWVKGHTGHKQNERCDKLARDAAEAKPKQIDTGYQESL.

The RNase H type-1 domain occupies 4-145; the sequence is THKQVNIYTD…CDKLARDAAE (142 aa). Mg(2+) contacts are provided by D13, E51, D73, and D137.

Belongs to the RNase H family. In terms of assembly, monomer. Mg(2+) is required as a cofactor.

Its subcellular location is the cytoplasm. It carries out the reaction Endonucleolytic cleavage to 5'-phosphomonoester.. Functionally, endonuclease that specifically degrades the RNA of RNA-DNA hybrids. In Shewanella denitrificans (strain OS217 / ATCC BAA-1090 / DSM 15013), this protein is Ribonuclease H.